Consider the following 500-residue polypeptide: Lysine--tRNA ligase (500 aa).

Mg(2+) is bound by residues glutamate 410 and glutamate 417.

This sequence belongs to the class-II aminoacyl-tRNA synthetase family. As to quaternary structure, homodimer. Mg(2+) is required as a cofactor.

Its subcellular location is the cytoplasm. It carries out the reaction tRNA(Lys) + L-lysine + ATP = L-lysyl-tRNA(Lys) + AMP + diphosphate. The chain is Lysine--tRNA ligase from Shewanella sp. (strain ANA-3).